Consider the following 748-residue polypeptide: Peptidyl serine alpha-galactosyltransferase (748 aa).

A signal peptide spans 1-26 (MVAVFHGPLVLGALLLLLALQHGASA). Topologically, residues 27-710 (EEPGFANRTG…GPSLHSLLGR (684 aa)) are extracellular. N-linked (GlcNAc...) asparagine glycosylation is found at N33, N184, and N297. Residues 415-449 (CQDFHPKCEEWKESGECTKNENYMTENCRKTCDKC) enclose the ShKT domain. 3 disulfide bridges follow: C415–C449, C422–C442, and C431–C446. Disordered stretches follow at residues 474–576 (ELQP…ADPK) and 611–670 (EVPK…KKNI). Residues 531–565 (SPPPSPPPASPPPVDSPPPMSPPPESPSPDKPPPK) show a composition bias toward pro residues. The segment covering 611–637 (EVPKRTKATDEEEEAPKAKHAESHLTL) has biased composition (basic and acidic residues). The chain crosses the membrane as a helical span at residues 711–731 (LNTWQALVLWLVVVVAFLALV). Residues 732-748 (PRIAKLRRRQRSGMRTE) lie on the Cytoplasmic side of the membrane.

It depends on Mn(2+) as a cofactor.

It is found in the membrane. Its function is as follows. Glycosyltransferase involved in the O-galactosylation of several proteins including extensins. Catalyzes the transfer of alpha-galactosyl to Ser residues. Hydroxylation of proline residues adjacent to the serine acceptor is required for activity. Utilizes selectively UDP-galactose as a donor nucleotide sugar. The protein is Peptidyl serine alpha-galactosyltransferase of Chlamydomonas reinhardtii (Chlamydomonas smithii).